The following is a 228-amino-acid chain: SPbeta prophage-derived uncharacterized protein YomL (228 aa).

A signal peptide spans 1 to 28 (MRKKRVITCVMAASLTLGSLLPAGYATA).

The chain is SPbeta prophage-derived uncharacterized protein YomL (yomL) from Bacillus subtilis (strain 168).